The following is a 406-amino-acid chain: Phosphopentomutase (406 aa).

6 residues coordinate Mn(2+): Asp-10, Asp-305, His-310, Asp-346, His-347, and His-358.

This sequence belongs to the phosphopentomutase family. Mn(2+) serves as cofactor.

It localises to the cytoplasm. It catalyses the reaction 2-deoxy-alpha-D-ribose 1-phosphate = 2-deoxy-D-ribose 5-phosphate. The catalysed reaction is alpha-D-ribose 1-phosphate = D-ribose 5-phosphate. The protein operates within carbohydrate degradation; 2-deoxy-D-ribose 1-phosphate degradation; D-glyceraldehyde 3-phosphate and acetaldehyde from 2-deoxy-alpha-D-ribose 1-phosphate: step 1/2. Functionally, isomerase that catalyzes the conversion of deoxy-ribose 1-phosphate (dRib-1-P) and ribose 1-phosphate (Rib-1-P) to deoxy-ribose 5-phosphate (dRib-5-P) and ribose 5-phosphate (Rib-5-P), respectively. In Vibrio vulnificus (strain CMCP6), this protein is Phosphopentomutase.